The primary structure comprises 351 residues: DNA beta-glucosyltransferase (351 aa).

Monomer.

It carries out the reaction Transfers a beta-D-glucosyl residue from UDP-alpha-D-glucose to a hydroxymethylcytosine residue in DNA.. It participates in genetic information processing; DNA modification. Catalyzes the transfer of glucose from uridine diphosphoglucose to 5-hydroxymethyl cytosine of T4 DNA to yield glucosyl 5-hydroxymethyl cytosine (glc-HMC). This DNA process seems to occur immediately after DNA synthesis since the DNA alpha-glucosyltransferase interacts with the clamp protein gp45. The glc-HMC modification protects the phage genome against its own nucleases and the host restriction endonuclease system. The glc-HMC modification also protects against the host CRISPR-Cas9 defense system. This is DNA beta-glucosyltransferase (bgt) from Enterobacteria phage T4 (Bacteriophage T4).